The chain runs to 638 residues: Threonine--tRNA ligase (638 aa).

Residues 1-62 (MYQLTLPDKS…EKNSNIEVLT (62 aa)) enclose the TGS domain. A catalytic region spans residues 246-537 (DHRKIGKEMD…LIEHYEGKFP (292 aa)). Zn(2+) is bound by residues Cys337, His388, and His514.

Belongs to the class-II aminoacyl-tRNA synthetase family. Homodimer. The cofactor is Zn(2+).

The protein localises to the cytoplasm. The catalysed reaction is tRNA(Thr) + L-threonine + ATP = L-threonyl-tRNA(Thr) + AMP + diphosphate + H(+). Functionally, catalyzes the attachment of threonine to tRNA(Thr) in a two-step reaction: L-threonine is first activated by ATP to form Thr-AMP and then transferred to the acceptor end of tRNA(Thr). Also edits incorrectly charged L-seryl-tRNA(Thr). The sequence is that of Threonine--tRNA ligase from Leptospira interrogans serogroup Icterohaemorrhagiae serovar copenhageni (strain Fiocruz L1-130).